Reading from the N-terminus, the 174-residue chain is RNA pyrophosphohydrolase (174 aa).

In terms of domain architecture, Nudix hydrolase spans 6–149 (GFRANVGIII…KRDVYRKVMK (144 aa)). The Nudix box motif lies at 38–59 (GGVDDGETAEEAMYRELYEEVG).

It belongs to the Nudix hydrolase family. RppH subfamily. Requires a divalent metal cation as cofactor.

In terms of biological role, accelerates the degradation of transcripts by removing pyrophosphate from the 5'-end of triphosphorylated RNA, leading to a more labile monophosphorylated state that can stimulate subsequent ribonuclease cleavage. The chain is RNA pyrophosphohydrolase from Shewanella sp. (strain MR-7).